The sequence spans 157 residues: 2-C-methyl-D-erythritol 2,4-cyclodiphosphate synthase (157 aa).

The a divalent metal cation site is built by aspartate 8 and histidine 10. Residues 8–10 and 34–35 each bind 4-CDP-2-C-methyl-D-erythritol 2-phosphate; these read DVH and HS. Histidine 42 contributes to the a divalent metal cation binding site. Residues 56 to 58, 61 to 65, 100 to 106, 132 to 135, and phenylalanine 139 contribute to the 4-CDP-2-C-methyl-D-erythritol 2-phosphate site; these read DIG, FPDTD, AQRPKMA, and TTEE.

It belongs to the IspF family. Homotrimer. It depends on a divalent metal cation as a cofactor.

The catalysed reaction is 4-CDP-2-C-methyl-D-erythritol 2-phosphate = 2-C-methyl-D-erythritol 2,4-cyclic diphosphate + CMP. It functions in the pathway isoprenoid biosynthesis; isopentenyl diphosphate biosynthesis via DXP pathway; isopentenyl diphosphate from 1-deoxy-D-xylulose 5-phosphate: step 4/6. Its function is as follows. Involved in the biosynthesis of isopentenyl diphosphate (IPP) and dimethylallyl diphosphate (DMAPP), two major building blocks of isoprenoid compounds. Catalyzes the conversion of 4-diphosphocytidyl-2-C-methyl-D-erythritol 2-phosphate (CDP-ME2P) to 2-C-methyl-D-erythritol 2,4-cyclodiphosphate (ME-CPP) with a corresponding release of cytidine 5-monophosphate (CMP). The sequence is that of 2-C-methyl-D-erythritol 2,4-cyclodiphosphate synthase from Trichlorobacter lovleyi (strain ATCC BAA-1151 / DSM 17278 / SZ) (Geobacter lovleyi).